We begin with the raw amino-acid sequence, 23 residues long: KVIDVKCTSPKQCLPPCKAQFGD.

This sequence belongs to the short scorpion toxin superfamily. Potassium channel inhibitor family. Alpha-KTx 02 subfamily. In terms of tissue distribution, expressed by the venom gland.

It is found in the secreted. Its function is as follows. Potent selective inhibitor of Kv1/KCNA voltage-gated potassium channels. The polypeptide is Hongotoxin-4 (Centruroides limbatus (Bark scorpion)).